A 173-amino-acid chain; its full sequence is MVNDNYNTAEGIDSYYLVNSKHKYSITSPSPLDNLLVLYGLEPIAKSLARTNADGSKGVKLRKSYKNHIQDLPGKHQIVGGQKPIPAGLLDPMVAQAPDIIKELDPELLSRGLRFEKTPINGIPGFNTADLAINDQHTLMRGDDMSENDEFGARRSKRKKKAQNGTDSKRQHI.

Positions 139–173 (LMRGDDMSENDEFGARRSKRKKKAQNGTDSKRQHI) are disordered.

Belongs to the Mediator complex subunit 19 family. As to quaternary structure, component of the Mediator complex.

It is found in the nucleus. In terms of biological role, component of the Mediator complex, a coactivator involved in the regulated transcription of nearly all RNA polymerase II-dependent genes. Mediator functions as a bridge to convey information from gene-specific regulatory proteins to the basal RNA polymerase II transcription machinery. Mediator is recruited to promoters by direct interactions with regulatory proteins and serves as a scaffold for the assembly of a functional preinitiation complex with RNA polymerase II and the general transcription factors. This Scheffersomyces stipitis (strain ATCC 58785 / CBS 6054 / NBRC 10063 / NRRL Y-11545) (Yeast) protein is Mediator of RNA polymerase II transcription subunit 19 (ROX3).